Consider the following 931-residue polypeptide: Protein translocase subunit SecA (931 aa).

Residues Gln87, 105-109, and Asp515 each bind ATP; that span reads GEGKT. Cys915, Cys917, Cys926, and His927 together coordinate Zn(2+).

The protein belongs to the SecA family. Monomer and homodimer. Part of the essential Sec protein translocation apparatus which comprises SecA, SecYEG and auxiliary proteins SecDF-YajC and YidC. Zn(2+) serves as cofactor.

Its subcellular location is the cell inner membrane. It is found in the cytoplasm. The catalysed reaction is ATP + H2O + cellular proteinSide 1 = ADP + phosphate + cellular proteinSide 2.. In terms of biological role, part of the Sec protein translocase complex. Interacts with the SecYEG preprotein conducting channel. Has a central role in coupling the hydrolysis of ATP to the transfer of proteins into and across the cell membrane, serving both as a receptor for the preprotein-SecB complex and as an ATP-driven molecular motor driving the stepwise translocation of polypeptide chains across the membrane. The sequence is that of Protein translocase subunit SecA from Burkholderia ambifaria (strain MC40-6).